A 380-amino-acid polypeptide reads, in one-letter code: Septin homolog spn6 (380 aa).

A Septin-type G domain is found at Lys-27–Asn-297. The tract at residues Gly-37–Thr-44 is G1 motif. GTP is bound by residues Gly-37–Thr-44, Thr-72, Gly-98, Lys-177–Glu-185, and Arg-246. The segment at Asp-95–Gly-98 is G3 motif. Positions Ala-176–Asp-179 are G4 motif. Residues Lys-304 to Lys-380 are a coiled coil.

It belongs to the TRAFAC class TrmE-Era-EngA-EngB-Septin-like GTPase superfamily. Septin GTPase family. As to quaternary structure, component of the sporulation-specific septin complex composed of at least spn2, spn5, spn6 and spn7.

It is found in the cytoplasm. It localises to the forespore membrane. Its function is as follows. Septin-like protein involved in the correct orientation of forespore membrane extension during sporulation. In Schizosaccharomyces pombe (strain 972 / ATCC 24843) (Fission yeast), this protein is Septin homolog spn6 (spn6).